Consider the following 878-residue polypeptide: DNA mismatch repair protein MutS (878 aa).

An ATP-binding site is contributed by 618–625 (GPNMGGKS). Basic and acidic residues-rich tracts occupy residues 800-811 (LEEESSRQRAEP) and 863-878 (GADK…ARSR). Disordered regions lie at residues 800–842 (LEEE…PDEL) and 859–878 (SGEE…ARSR).

This sequence belongs to the DNA mismatch repair MutS family.

In terms of biological role, this protein is involved in the repair of mismatches in DNA. It is possible that it carries out the mismatch recognition step. This protein has a weak ATPase activity. This Alkalilimnicola ehrlichii (strain ATCC BAA-1101 / DSM 17681 / MLHE-1) protein is DNA mismatch repair protein MutS.